A 357-amino-acid chain; its full sequence is 3-isopropylmalate dehydrogenase (357 aa).

76-89 (GPQWDTIDPALRPE) lines the NAD(+) pocket. Substrate is bound by residues R96, R106, R134, and D224. Mg(2+)-binding residues include D224, D248, and D252. 282–294 (GSAPDIAGQGVAN) contacts NAD(+).

Belongs to the isocitrate and isopropylmalate dehydrogenases family. LeuB type 1 subfamily. In terms of assembly, homodimer. Requires Mg(2+) as cofactor. Mn(2+) serves as cofactor.

The protein localises to the cytoplasm. The catalysed reaction is (2R,3S)-3-isopropylmalate + NAD(+) = 4-methyl-2-oxopentanoate + CO2 + NADH. It participates in amino-acid biosynthesis; L-leucine biosynthesis; L-leucine from 3-methyl-2-oxobutanoate: step 3/4. Its function is as follows. Catalyzes the oxidation of 3-carboxy-2-hydroxy-4-methylpentanoate (3-isopropylmalate) to 3-carboxy-4-methyl-2-oxopentanoate. The product decarboxylates to 4-methyl-2 oxopentanoate. The polypeptide is 3-isopropylmalate dehydrogenase (Xylella fastidiosa (strain Temecula1 / ATCC 700964)).